Here is a 464-residue protein sequence, read N- to C-terminus: Protein FAM90A18 (464 aa).

Disordered regions lie at residues 1 to 42, 70 to 387, and 415 to 437; these read MMAR…DPRL, PATL…ASHD, and HSPE…SEAP. Composition is skewed to basic and acidic residues over residues 74-89 and 97-114; these read GKKE…KPRV and NKDK…DPQR. A compositionally biased stretch (low complexity) spans 180–197; it reads LASLSPLRKASLSSSSSL.

This sequence belongs to the FAM90 family.

This Homo sapiens (Human) protein is Protein FAM90A18.